The chain runs to 207 residues: ATP-dependent Clp protease proteolytic subunit (207 aa).

S111 functions as the Nucleophile in the catalytic mechanism. H136 is an active-site residue.

It belongs to the peptidase S14 family. In terms of assembly, fourteen ClpP subunits assemble into 2 heptameric rings which stack back to back to give a disk-like structure with a central cavity, resembling the structure of eukaryotic proteasomes.

The protein localises to the cytoplasm. The enzyme catalyses Hydrolysis of proteins to small peptides in the presence of ATP and magnesium. alpha-casein is the usual test substrate. In the absence of ATP, only oligopeptides shorter than five residues are hydrolyzed (such as succinyl-Leu-Tyr-|-NHMec, and Leu-Tyr-Leu-|-Tyr-Trp, in which cleavage of the -Tyr-|-Leu- and -Tyr-|-Trp bonds also occurs).. Functionally, cleaves peptides in various proteins in a process that requires ATP hydrolysis. Has a chymotrypsin-like activity. Plays a major role in the degradation of misfolded proteins. In Burkholderia mallei (strain ATCC 23344), this protein is ATP-dependent Clp protease proteolytic subunit.